Here is a 184-residue protein sequence, read N- to C-terminus: ATP synthase subunit b (184 aa).

The chain crosses the membrane as a helical span at residues 16-36 (LIPPIPELVIGLIAFVIVFGF).

It belongs to the ATPase B chain family. In terms of assembly, F-type ATPases have 2 components, F(1) - the catalytic core - and F(0) - the membrane proton channel. F(1) has five subunits: alpha(3), beta(3), gamma(1), delta(1), epsilon(1). F(0) has three main subunits: a(1), b(2) and c(10-14). The alpha and beta chains form an alternating ring which encloses part of the gamma chain. F(1) is attached to F(0) by a central stalk formed by the gamma and epsilon chains, while a peripheral stalk is formed by the delta and b chains.

The protein resides in the cell membrane. F(1)F(0) ATP synthase produces ATP from ADP in the presence of a proton or sodium gradient. F-type ATPases consist of two structural domains, F(1) containing the extramembraneous catalytic core and F(0) containing the membrane proton channel, linked together by a central stalk and a peripheral stalk. During catalysis, ATP synthesis in the catalytic domain of F(1) is coupled via a rotary mechanism of the central stalk subunits to proton translocation. Functionally, component of the F(0) channel, it forms part of the peripheral stalk, linking F(1) to F(0). The polypeptide is ATP synthase subunit b (Streptomyces coelicolor (strain ATCC BAA-471 / A3(2) / M145)).